We begin with the raw amino-acid sequence, 188 residues long: MFHQIWAALLYLYGILLNSIYQCPEHSQLTTGGVDGKEFPEPHLGQWYFIAGAAPTKEELATFDPVDNIVFNMAAGSVPMQLQLRATIRTKNGLCVPRKWIYRLSEGNTDLRTEGRPDMKTKLFSSTCPGGIMLKETGQGYQRFLLYNRSPHPPEKCVEEFQSLTSCLDFKAFLLTPRNQEACELSSN.

A signal peptide (not cleaved) is located at residues 1-22 (MFHQIWAALLYLYGILLNSIYQ). 3 disulfides stabilise this stretch: cysteine 23-cysteine 167, cysteine 95-cysteine 183, and cysteine 128-cysteine 157. Positions 136 and 143 each coordinate tetradecanoate.

The protein belongs to the calycin superfamily. Lipocalin family. Highly divergent. Interacts with LRP2; LRP2 mediates APOM renal uptake and subsequent lysosomal degradation.

The protein resides in the secreted. In terms of biological role, probably involved in lipid transport. Can bind sphingosine-1-phosphate, myristic acid, palmitic acid and stearic acid, retinol, all-trans-retinoic acid and 9-cis-retinoic acid. The chain is Apolipoprotein M (APOM) from Sus scrofa (Pig).